The following is a 2335-amino-acid chain: Serine/threonine-protein kinase tor1 (2335 aa).

HEAT repeat units follow at residues 1-31 (MEYF…SSTK), 164-201 (LYIS…VVCQ), 331-371 (PYLQ…AVKL), 410-449 (PIQE…AREP), 474-512 (YSLI…RDPI), 522-560 (ESVA…RHLA), 562-596 (PDNI…YNPA), 642-679 (PYIQ…VEGE), 684-722 (DVRG…RSGY), 728-766 (LDYP…LDPY), 843-880 (VFLP…IIGP), 904-923 (LLVI…DEFK), 924-961 (FYLP…FGSN), 964-1003 (EYMH…SVNF), and 1005-1042 (DHAS…QLGY). One can recognise an FAT domain in the interval 1226–1781 (VISAHASKCN…VYSLTVSSKS (556 aa)). Residues 1955–2269 (FHHTFEVISS…ARHADYAALS (315 aa)) form the PI3K/PI4K catalytic domain. The G-loop stretch occupies residues 1961 to 1967 (VISSKQR). Position 1972 is a phosphothreonine; by PKB/AKT1 (threonine 1972). Residues 2134–2142 (GLGDRHPSN) are catalytic loop. Residues 2154 to 2179 (HIDFGDCFEVAMHREKFPEKIPFRLT) form an activation loop region. Positions 2303-2335 (EQLPVKAQVEKLIQQATAPENLCRCYVGWCSFW) constitute an FATC domain.

This sequence belongs to the PI3/PI4-kinase family. The target of rapamycin complex 2 (TORC2) is composed of at least bit61, pop3/wat1, sin1, ste20 and tor1. Phosphorylation at Thr-1972 in the ATP-binding region by AKT1 strongly reduces kinase activity.

The protein localises to the cytoplasm. It catalyses the reaction L-seryl-[protein] + ATP = O-phospho-L-seryl-[protein] + ADP + H(+). The enzyme catalyses L-threonyl-[protein] + ATP = O-phospho-L-threonyl-[protein] + ADP + H(+). In terms of biological role, catalytic component of TORC2, which regulates multiple cellular processes to control cell growth in response to environmental signals. In response to signals, TORC2 phosphorylates AGC protein kinase family members. TORC2 is required for cell survival under various stress conditions. TORC2 positively controls G1 cell-cycle arrest, sexual development and amino acid uptake. Positively regulates amino acid uptake through the control of expression of amino acid permeases. Responsible for the phosphorylation of AGC kinase gad8 at 'Ser-527' and 'Ser-546', activating gad8 kinase activity and promoting sexual development. This Schizosaccharomyces pombe (strain 972 / ATCC 24843) (Fission yeast) protein is Serine/threonine-protein kinase tor1.